The primary structure comprises 261 residues: Hydroxyethylthiazole kinase (261 aa).

Met-40 serves as a coordination point for substrate. Residues Lys-116 and Thr-162 each contribute to the ATP site. Substrate is bound at residue Gly-189.

The protein belongs to the Thz kinase family. It depends on Mg(2+) as a cofactor.

It catalyses the reaction 5-(2-hydroxyethyl)-4-methylthiazole + ATP = 4-methyl-5-(2-phosphooxyethyl)-thiazole + ADP + H(+). It participates in cofactor biosynthesis; thiamine diphosphate biosynthesis; 4-methyl-5-(2-phosphoethyl)-thiazole from 5-(2-hydroxyethyl)-4-methylthiazole: step 1/1. Catalyzes the phosphorylation of the hydroxyl group of 4-methyl-5-beta-hydroxyethylthiazole (THZ). In Methanosarcina acetivorans (strain ATCC 35395 / DSM 2834 / JCM 12185 / C2A), this protein is Hydroxyethylthiazole kinase.